The primary structure comprises 262 residues: Regulatory protein RecX (262 aa).

This sequence belongs to the RecX family.

It localises to the cytoplasm. In terms of biological role, modulates RecA activity. This chain is Regulatory protein RecX, found in Photobacterium profundum (strain SS9).